Here is a 203-residue protein sequence, read N- to C-terminus: Large ribosomal subunit protein bL25 (203 aa).

It belongs to the bacterial ribosomal protein bL25 family. CTC subfamily. In terms of assembly, part of the 50S ribosomal subunit; part of the 5S rRNA/L5/L18/L25 subcomplex. Contacts the 5S rRNA. Binds to the 5S rRNA independently of L5 and L18.

In terms of biological role, this is one of the proteins that binds to the 5S RNA in the ribosome where it forms part of the central protuberance. The protein is Large ribosomal subunit protein bL25 of Cereibacter sphaeroides (strain ATCC 17029 / ATH 2.4.9) (Rhodobacter sphaeroides).